The sequence spans 68 residues: Probable tautomerase Cj0270 (68 aa).

Pro2 (proton acceptor; via imino nitrogen) is an active-site residue.

The protein belongs to the 4-oxalocrotonate tautomerase family.

In Campylobacter jejuni subsp. jejuni serotype O:2 (strain ATCC 700819 / NCTC 11168), this protein is Probable tautomerase Cj0270.